Here is a 59-residue protein sequence, read N- to C-terminus: Large ribosomal subunit protein uL30 (59 aa).

Belongs to the universal ribosomal protein uL30 family. Part of the 50S ribosomal subunit.

In Leptospira borgpetersenii serovar Hardjo-bovis (strain JB197), this protein is Large ribosomal subunit protein uL30.